Here is a 446-residue protein sequence, read N- to C-terminus: MSTFIGQLVGFAAIVYLVWWYVVPPVCRLMRARRDAVRQQLTEAAEAADRLVEASQAHTKATEDAKVEAQRVVKEAVEDAKRIVEQLQAQADVEAERIKLQGARQVELLRAQLTRQLRLKFGHESVRQAAELVRNHVADAVQQSATVDRFLDDLDAMTPKGADVEYPLLAKMRSASRRALVDLADRFGAIAKSLDNQALYTLAGELVSVAKMLDREIVVTRYLTVPVEDEAPRVKLIDRLVSAHVGDPTMEILRAAVSERWSANTDLVDALEHISRQALLEVAEREDQIDEVEDQVFRFSRILDVAPRLAILLDDYAVPADSRVRLLCNVLQSASSVVNPIAVALLSQTVELLRGQPAKEAILFLAEVAVARRGEVVAQVSAAAEISDAQRTRLTEVLSRIYGHPVTVQMQIDAALLGGLSIVVGDEVIDGTLSSCLVAAEAALPD.

The ATP synthase subunit b stretch occupies residues 1–168 (MSTFIGQLVG…PKGADVEYPL (168 aa)). The helical transmembrane segment at 4–24 (FIGQLVGFAAIVYLVWWYVVP) threads the bilayer. The segment at 169 to 446 (LAKMRSASRR…LVAAEAALPD (278 aa)) is ATP synthase subunit delta.

This sequence in the N-terminal section; belongs to the ATPase B chain family. The protein in the C-terminal section; belongs to the ATPase delta chain family. In terms of assembly, F-type ATPases have 2 components, F(1) - the catalytic core - and F(0) - the membrane proton channel. F(1) has five subunits: alpha(3), beta(3), gamma(1), delta(1), epsilon(1). F(0) has three main subunits: a(1), b(2) and c(10-14). The alpha and beta chains form an alternating ring which encloses part of the gamma chain. F(1) is attached to F(0) by a central stalk formed by the gamma and epsilon chains, while a peripheral stalk is formed by the delta and b chains.

The protein localises to the cell membrane. Functionally, f(1)F(0) ATP synthase produces ATP from ADP in the presence of a proton or sodium gradient. F-type ATPases consist of two structural domains, F(1) containing the extramembraneous catalytic core and F(0) containing the membrane proton channel, linked together by a central stalk and a peripheral stalk. During catalysis, ATP synthesis in the catalytic domain of F(1) is coupled via a rotary mechanism of the central stalk subunits to proton translocation. This fusion protein includes a component of the F(0) channel (subunit b) and of the F(1) subunit (subunit delta). Two copies of subunit b and one of delta together form the peripheral 'stator' stalk which links F(1) to F(0). The polypeptide is ATP synthase subunit b-delta (atpFH) (Mycobacterium leprae (strain Br4923)).